The chain runs to 195 residues: Adenylate kinase (195 aa).

11–16 is an ATP binding site; it reads GAGKGT. The segment at 31–60 is NMP; the sequence is STGDIFRAAVRNQTPLGQQVQAYLDSGRLV. AMP contacts are provided by residues Thr32, Arg37, 58–60, 86–89, and Gln93; these read RLV and GFPR. An LID region spans residues 127–137; sequence LRAEKESRKDD. Arg128 lines the ATP pocket. Arg134 and Arg145 together coordinate AMP. Position 173 (Gln173) interacts with ATP.

It belongs to the adenylate kinase family. As to quaternary structure, monomer.

It is found in the cytoplasm. The catalysed reaction is AMP + ATP = 2 ADP. The protein operates within purine metabolism; AMP biosynthesis via salvage pathway; AMP from ADP: step 1/1. Functionally, catalyzes the reversible transfer of the terminal phosphate group between ATP and AMP. Plays an important role in cellular energy homeostasis and in adenine nucleotide metabolism. The sequence is that of Adenylate kinase from Cyanothece sp. (strain PCC 7425 / ATCC 29141).